A 234-amino-acid chain; its full sequence is Large ribosomal subunit protein uL1 (234 aa).

The protein belongs to the universal ribosomal protein uL1 family. In terms of assembly, part of the 50S ribosomal subunit.

Binds directly to 23S rRNA. The L1 stalk is quite mobile in the ribosome, and is involved in E site tRNA release. Its function is as follows. Protein L1 is also a translational repressor protein, it controls the translation of the L11 operon by binding to its mRNA. The protein is Large ribosomal subunit protein uL1 of Helicobacter acinonychis (strain Sheeba).